A 521-amino-acid chain; its full sequence is Bacillolysin (521 aa).

The signal sequence occupies residues 1–27; it reads MGLGKKLSVAVAASFMSLTISLPGVQA. Residues 28–221 constitute a propeptide, activation peptide; it reads AENPQLKENL…ILKKQNKVEH (194 aa). Gln283 and Asp360 together coordinate Ca(2+). His364 is a binding site for Zn(2+). Glu365 is an active-site residue. The Zn(2+) site is built by His368 and Glu388. Residues Asp399, Asp402, Asp404, Glu407, and Val411 each coordinate Ca(2+). His449 (proton donor) is an active-site residue.

It belongs to the peptidase M4 family. Ca(2+) serves as cofactor. Requires Zn(2+) as cofactor.

The protein resides in the secreted. It carries out the reaction Similar, but not identical, to that of thermolysin.. Functionally, extracellular zinc metalloprotease. The polypeptide is Bacillolysin (npr) (Bacillus amyloliquefaciens (Bacillus velezensis)).